The primary structure comprises 671 residues: DNA ligase (671 aa).

NAD(+)-binding positions include 31–35 (DAEYD), 80–81 (SL), and Glu110. Lys112 (N6-AMP-lysine intermediate) is an active-site residue. Arg133, Glu167, Lys283, and Lys307 together coordinate NAD(+). Cys401, Cys404, Cys419, and Cys424 together coordinate Zn(2+). The BRCT domain occupies 587 to 671 (EEELVFTGKT…YLPDEGGLNE (85 aa)).

It belongs to the NAD-dependent DNA ligase family. LigA subfamily. It depends on Mg(2+) as a cofactor. Mn(2+) serves as cofactor.

The enzyme catalyses NAD(+) + (deoxyribonucleotide)n-3'-hydroxyl + 5'-phospho-(deoxyribonucleotide)m = (deoxyribonucleotide)n+m + AMP + beta-nicotinamide D-nucleotide.. Its function is as follows. DNA ligase that catalyzes the formation of phosphodiester linkages between 5'-phosphoryl and 3'-hydroxyl groups in double-stranded DNA using NAD as a coenzyme and as the energy source for the reaction. It is essential for DNA replication and repair of damaged DNA. The polypeptide is DNA ligase (Listeria monocytogenes serotype 4b (strain F2365)).